A 348-amino-acid chain; its full sequence is Anthranilate phosphoribosyltransferase (348 aa).

5-phospho-alpha-D-ribose 1-diphosphate is bound by residues Gly93, 96–97 (GD), Thr101, 103–106 (NVST), 121–129 (KHGNRAVSS), and Ser133. Gly93 contributes to the anthranilate binding site. Ser105 is a binding site for Mg(2+). Residue Asn124 coordinates anthranilate. Arg179 provides a ligand contact to anthranilate. Asp238 and Glu239 together coordinate Mg(2+).

This sequence belongs to the anthranilate phosphoribosyltransferase family. In terms of assembly, homodimer. Mg(2+) serves as cofactor.

The catalysed reaction is N-(5-phospho-beta-D-ribosyl)anthranilate + diphosphate = 5-phospho-alpha-D-ribose 1-diphosphate + anthranilate. It functions in the pathway amino-acid biosynthesis; L-tryptophan biosynthesis; L-tryptophan from chorismate: step 2/5. In terms of biological role, catalyzes the transfer of the phosphoribosyl group of 5-phosphorylribose-1-pyrophosphate (PRPP) to anthranilate to yield N-(5'-phosphoribosyl)-anthranilate (PRA). The chain is Anthranilate phosphoribosyltransferase from Desulfotalea psychrophila (strain LSv54 / DSM 12343).